The chain runs to 344 residues: Follistatin (344 aa).

The first 29 residues, 1-29 (MARPRHQPGGLCLLLLLLCQFMEDRSAQA), serve as a signal peptide directing secretion. A TB domain is found at 30–103 (GNCWLRQAKN…TCENVDCGPG (74 aa)). Intrachain disulfides connect Cys32-Cys55, Cys42-Cys88, Cys56-Cys91, Cys95-Cys106, Cys100-Cys116, Cys118-Cys150, Cys122-Cys143, and Cys132-Cys164. Positions 94–117 (TCENVDCGPGKKCRMNKKNKPRCV) constitute a Follistatin-like 1 domain. Kazal-like domains are found at residues 112–166 (NKPR…KCKK), 186–241 (NAYC…KCIK), and 261–318 (KVGR…SCNS). Asn124 is a glycosylation site (N-linked (GlcNAc...) asparagine). Residues 167–190 (TCRDVFCPGSSTCVVDQTNNAYCV) form the Follistatin-like 2 domain. 3 disulfide bridges follow: Cys192-Cys225, Cys196-Cys218, and Cys207-Cys239. Residues 244–268 (SCDDIQCTGGKKCLWDFKVGRGRCS) enclose the Follistatin-like 3 domain. 3 cysteine pairs are disulfide-bonded: Cys270/Cys302, Cys274/Cys295, and Cys284/Cys316. Asn288 is a glycosylation site (N-linked (GlcNAc...) asparagine). Residues 316-344 (CNSISEDTEDEEEDEDQDYSFPISSILEW) form a disordered region. The span at 321–333 (EDTEDEEEDEDQD) shows a compositional bias: acidic residues.

As to quaternary structure, interacts with GDF11. Interacts with activin A/INHBA. Interacts with myostatin/MSTN.

The protein localises to the secreted. The protein resides in the nucleus. It is found in the nucleolus. Its function is as follows. Multifunctional regulatory protein whose primary function is to antagonize members of the transforming growth factor beta (TGF-beta) superfamily including activin, myostatin, GDF11 or bone morphogenetic proteins (BMPs). Mechanistically, binds to these ligands in the extracellular space, blocking their type II receptor-binding site to inhibit downstream signaling. Plays an essential role in muscle fiber formation and growth both by preventing the repressive effects of myostatin and through SMAD3/AKT/mTOR signaling independently of myostatin. Also promotes neural differentiation by antagonizing the action BMP4. Acts as a specific inhibitor of the biosynthesis and secretion of pituitary follicle stimulating hormone (FSH) by sequestering activin A/INHBA. On the other hand, translocates into the nucleus where it down-regulates rRNA synthesis and ribosome biogenesis to maintain cellular energy homeostasis by binding to rDNA. In Bos taurus (Bovine), this protein is Follistatin.